A 325-amino-acid chain; its full sequence is 4-hydroxy-3-methylbut-2-enyl diphosphate reductase (325 aa).

A [4Fe-4S] cluster-binding site is contributed by cysteine 13. Positions 42 and 76 each coordinate (2E)-4-hydroxy-3-methylbut-2-enyl diphosphate. Dimethylallyl diphosphate is bound by residues histidine 42 and histidine 76. Isopentenyl diphosphate contacts are provided by histidine 42 and histidine 76. Cysteine 98 contributes to the [4Fe-4S] cluster binding site. Residue histidine 126 participates in (2E)-4-hydroxy-3-methylbut-2-enyl diphosphate binding. Histidine 126 serves as a coordination point for dimethylallyl diphosphate. Histidine 126 provides a ligand contact to isopentenyl diphosphate. Residue glutamate 128 is the Proton donor of the active site. Threonine 169 is a binding site for (2E)-4-hydroxy-3-methylbut-2-enyl diphosphate. Cysteine 230 contributes to the [4Fe-4S] cluster binding site. Serine 258, serine 259, asparagine 260, and serine 306 together coordinate (2E)-4-hydroxy-3-methylbut-2-enyl diphosphate. Serine 258, serine 259, asparagine 260, and serine 306 together coordinate dimethylallyl diphosphate. Serine 258, serine 259, asparagine 260, and serine 306 together coordinate isopentenyl diphosphate.

It belongs to the IspH family. The cofactor is [4Fe-4S] cluster.

It carries out the reaction isopentenyl diphosphate + 2 oxidized [2Fe-2S]-[ferredoxin] + H2O = (2E)-4-hydroxy-3-methylbut-2-enyl diphosphate + 2 reduced [2Fe-2S]-[ferredoxin] + 2 H(+). The enzyme catalyses dimethylallyl diphosphate + 2 oxidized [2Fe-2S]-[ferredoxin] + H2O = (2E)-4-hydroxy-3-methylbut-2-enyl diphosphate + 2 reduced [2Fe-2S]-[ferredoxin] + 2 H(+). It functions in the pathway isoprenoid biosynthesis; dimethylallyl diphosphate biosynthesis; dimethylallyl diphosphate from (2E)-4-hydroxy-3-methylbutenyl diphosphate: step 1/1. It participates in isoprenoid biosynthesis; isopentenyl diphosphate biosynthesis via DXP pathway; isopentenyl diphosphate from 1-deoxy-D-xylulose 5-phosphate: step 6/6. Catalyzes the conversion of 1-hydroxy-2-methyl-2-(E)-butenyl 4-diphosphate (HMBPP) into a mixture of isopentenyl diphosphate (IPP) and dimethylallyl diphosphate (DMAPP). Acts in the terminal step of the DOXP/MEP pathway for isoprenoid precursor biosynthesis. This is 4-hydroxy-3-methylbut-2-enyl diphosphate reductase from Prosthecochloris aestuarii (strain DSM 271 / SK 413).